The chain runs to 148 residues: MEFTLRQEALVNSSWEAFNQNLPLFSVLFYTFILEKAPIAKNMFSVLKDANEIPLANPSINAHTEMVFEMVRDAAAQLQTTGQVVLGDTTLGVVHTQKRVDGLHFMVVKEALLKTIKEAVGDKWSEELSNAWEIAYDGLAVAIMKEMS.

Positions 2–148 (EFTLRQEALV…LAVAIMKEMS (147 aa)) constitute a Globin domain. Nitrated tyrosine is present on Tyr-30. Ser-45 contributes to the heme b binding site. Phosphoserine is present on Ser-45. Residue His-63 participates in O2 binding. Residues His-95 and Lys-98 each contribute to the heme b site. Position 136 is a nitrated tyrosine (Tyr-136).

This sequence belongs to the plant globin family. As to quaternary structure, monomer. Nitrated in effective nodules and particularly in hypoxic conditions; this mechanism may play a protective role in the symbiosis by buffering toxic peroxynitrite NO(2)(-). Nitration level decrease during nodule senescence. In terms of processing, phosphorylation at Ser-45 disrupts the molecular environment of its porphyrin ring oxygen binding pocket, thus leading to a reduced oxygen consumption and to the delivery of oxygen O(2) to symbiosomes. As to expression, accumulates in root nodules after inoculation by bacteria of the genus Rhizobium. Expressed in mycorrhizal roots in the presence of the mycorrhizal fungus Glomus fasciculatum.

The protein localises to the cytoplasm. Its subcellular location is the cytosol. The protein resides in the nucleus. Functionally, leghemoglobin that reversibly binds oxygen O(2) through a pentacoordinated heme iron. In root nodules, facilitates the diffusion of oxygen to the bacteroids while preventing the bacterial nitrogenase from being inactivated by buffering dioxygen, nitric oxide and carbon monoxide, and promoting the formation of reactive oxygen species (ROS, e.g. H(2)O(2)). This role is essential for symbiotic nitrogen fixation (SNF). This chain is Leghemoglobin 29, found in Vicia faba (Broad bean).